We begin with the raw amino-acid sequence, 206 residues long: Triafestin-2 (206 aa).

An N-terminal signal peptide occupies residues 1-18; sequence MKTILAVIFFGILAFAFA. Residues Asn-25, Asn-55, and Asn-178 are each glycosylated (N-linked (GlcNAc...) asparagine).

It belongs to the calycin superfamily. Triabin family. In terms of assembly, interacts with host coagulation factor XII (F12) (inactive and activated) (via amino acids 1-77). Interacts with host high molecular weight kininogen (KNG1) (via amino acids 402-532). In terms of tissue distribution, salivary gland (at protein level).

It localises to the secreted. With respect to regulation, zn(2+) modulates binding to host coagulation factor XII (F12) and high molecular weight kininogen (KNG1). Its function is as follows. Suppresses activation of the host plasma kallikrein-kinin system, leading to inhibition of the intrinsic coagulation pathway. Blocks host coagulation factor XII (F12) and prekallikrein (KLKB1) reciprocal activation without affecting their amidolytic activities. Blocks binding of host F12 and high molecular weight kininogen (KNG1) to negatively charged surfaces. Attenuates generation of bradykinin by interfering with activation of host kallikrein-kinin system. This chain is Triafestin-2, found in Triatoma infestans (Assassin bug).